The following is a 366-amino-acid chain: Molybdenum import ATP-binding protein ModC (366 aa).

Residues Met1 to Ser231 enclose the ABC transporter domain. Gly33–Thr40 lines the ATP pocket. The region spanning Ala292 to Asp361 is the Mop domain.

It belongs to the ABC transporter superfamily. Molybdate importer (TC 3.A.1.8) family. The complex is composed of two ATP-binding proteins (ModC), two transmembrane proteins (ModB) and a solute-binding protein (ModA).

It localises to the cell inner membrane. The catalysed reaction is molybdate(out) + ATP + H2O = molybdate(in) + ADP + phosphate + H(+). Its function is as follows. Part of the ABC transporter complex ModABC involved in molybdenum import. Responsible for energy coupling to the transport system. This chain is Molybdenum import ATP-binding protein ModC, found in Vibrio cholerae serotype O1 (strain ATCC 39315 / El Tor Inaba N16961).